The sequence spans 162 residues: NADH-quinone oxidoreductase subunit I (162 aa).

2 4Fe-4S ferredoxin-type domains span residues 53–83 and 93–122; these read LRRY…IESE and TRYD…EGPN. Residues C63, C66, C69, C73, C102, C105, C108, and C112 each coordinate [4Fe-4S] cluster.

Belongs to the complex I 23 kDa subunit family. As to quaternary structure, NDH-1 is composed of 14 different subunits. Subunits NuoA, H, J, K, L, M, N constitute the membrane sector of the complex. It depends on [4Fe-4S] cluster as a cofactor.

It localises to the cell inner membrane. It carries out the reaction a quinone + NADH + 5 H(+)(in) = a quinol + NAD(+) + 4 H(+)(out). In terms of biological role, NDH-1 shuttles electrons from NADH, via FMN and iron-sulfur (Fe-S) centers, to quinones in the respiratory chain. The immediate electron acceptor for the enzyme in this species is believed to be ubiquinone. Couples the redox reaction to proton translocation (for every two electrons transferred, four hydrogen ions are translocated across the cytoplasmic membrane), and thus conserves the redox energy in a proton gradient. This chain is NADH-quinone oxidoreductase subunit I, found in Erythrobacter litoralis (strain HTCC2594).